The following is a 444-amino-acid chain: D(2) dopamine receptor (444 aa).

Topologically, residues 1 to 37 (MDPLNLSWYDDDLERQNWSRPFNGSEGKADRPHYNYY) are extracellular. N-linked (GlcNAc...) asparagine glycosylation is found at asparagine 5, asparagine 17, and asparagine 23. Residues 38-60 (AMLLTLLIFIIVFGNVLVCMAVS) traverse the membrane as a helical segment. The Cytoplasmic portion of the chain corresponds to 61–70 (REKALQTTTN). A helical membrane pass occupies residues 71-93 (YLIVSLAVADLLVATLVMPWVVY). The Extracellular segment spans residues 94–108 (LEVVGEWKFSRIHCD). Cysteines 107 and 182 form a disulfide. Residues 109–130 (IFVTLDVMMCTASILNLCAISI) traverse the membrane as a helical segment. Over 131 to 151 (DRYTAVAMPMLYNTRYSSKRR) the chain is Cytoplasmic. A helical membrane pass occupies residues 152-172 (VTVMIAIVWVLSFTISCPLLF). Residues 173-188 (GLNNTDQNECIIANPA) are Extracellular-facing. A helical membrane pass occupies residues 189–213 (FVVYSSIVSFYVPFIVTLLVYIKIY). The tract at residues 211-374 (KIYIVLRKRR…SQQKEKKATQ (164 aa)) is interaction with PPP1R9B. Residues 214 to 374 (IVLRKRRKRV…SQQKEKKATQ (161 aa)) lie on the Cytoplasmic side of the membrane. The interval 282-329 (EMLSSTSPPERTRYSPIPPSHHQLTLPDPSHHGLHSNPDSPAKPEKNG) is disordered. A helical transmembrane segment spans residues 375 to 396 (MLAIVLGVFIICWLPFFITHIL). The Extracellular segment spans residues 397-410 (NIHCDCNIPPVLYS). Cysteine 400 and cysteine 402 are joined by a disulfide. A helical transmembrane segment spans residues 411-432 (AFTWLGYVNSAVNPIIYTTFNI). Residues 433 to 444 (EFRKAFMKILHC) are Cytoplasmic-facing. Residue cysteine 444 is the site of S-palmitoyl cysteine attachment.

The protein belongs to the G-protein coupled receptor 1 family. In terms of assembly, forms homo- and heterooligomers with DRD4. The interaction with DRD4 may modulate agonist-induced downstream signaling. Interacts with CADPS and CADPS2. Interacts with GPRASP1, PPP1R9B and CLIC6. Interacts with ARRB2. Interacts with HTR2A. Interacts with DRD1. Interacts with KCNA2. Palmitoylated. Palmitoylation which is required for proper localization to the plasma membrane and stability of the receptor could be carried on by ZDHHC4, ZDHHC3 and ZDHHC8. As to expression, expressed in the anterior lobe of the pituitary gland. Expressed ventral tegmental area of the midbrain and the pars compacta of the substantia nigra. Expressed seven times more than isoform short in the caudate nucleus. Expressed in the anterior lobe of the pituitary gland. Expressed in the caudate nucleus. Not expressed in the wider brain.

The protein localises to the cell membrane. It is found in the golgi apparatus membrane. Its function is as follows. Dopamine receptor whose activity is mediated by G proteins which inhibit adenylyl cyclase. Positively regulates postnatal regression of retinal hyaloid vessels via suppression of VEGFR2/KDR activity, downstream of OPN5. This chain is D(2) dopamine receptor (Drd2), found in Rattus norvegicus (Rat).